A 341-amino-acid polypeptide reads, in one-letter code: G2/mitotic-specific cyclin C13-1 (341 aa).

Belongs to the cyclin family. Cyclin AB subfamily.

In terms of biological role, essential for the control of the cell cycle at the G2/M (mitosis) transition. Interacts with the CDC2 and CDK2 protein kinases to form MPF. G2/M cyclins accumulate steadily during G2 and are abruptly destroyed at mitosis. This chain is G2/mitotic-specific cyclin C13-1, found in Daucus carota (Wild carrot).